The sequence spans 141 residues: Hemoglobin subunit alpha-A/Q/R/T (141 aa).

Positions 1-141 (VLSPADKTNV…VSTVLTSKYR (141 aa)) constitute a Globin domain. Serine 3 carries the phosphoserine modification. Lysine 7 bears the N6-succinyllysine mark. Threonine 8 carries the phosphothreonine modification. Lysine 11 is subject to N6-succinyllysine. Lysine 16 is subject to N6-acetyllysine; alternate. Lysine 16 is modified (N6-succinyllysine; alternate). A Phosphotyrosine modification is found at tyrosine 24. At serine 35 the chain carries Phosphoserine. N6-succinyllysine is present on lysine 40. The residue at position 49 (serine 49) is a Phosphoserine. Histidine 58 contacts O2. Position 87 (histidine 87) interacts with heme b. Serine 102 is modified (phosphoserine). Threonine 108 bears the Phosphothreonine mark. Phosphoserine occurs at positions 124 and 131. Threonine 134 and threonine 137 each carry phosphothreonine. At serine 138 the chain carries Phosphoserine.

It belongs to the globin family. As to quaternary structure, heterotetramer of two alpha chains and two beta chains. In terms of tissue distribution, red blood cells.

In terms of biological role, involved in oxygen transport from the lung to the various peripheral tissues. This chain is Hemoglobin subunit alpha-A/Q/R/T, found in Macaca fascicularis (Crab-eating macaque).